The primary structure comprises 183 residues: Der GTPase-activating protein YihI (183 aa).

The segment covering 1–18 has biased composition (low complexity); the sequence is MNQPSKAPRAPRSSAATP. Residues 1-114 are disordered; sequence MNQPSKAPRA…EEELAKLEND (114 aa). The span at 25–34 shows a compositional bias: basic and acidic residues; sequence RAELDQEARE. The segment covering 56–65 has biased composition (low complexity); that stretch reads NQKNKAAAQA. Positions 92 to 114 are enriched in basic and acidic residues; it reads PKAEAKPKPRLTPEEELAKLEND.

This sequence belongs to the YihI family. Interacts with Der.

Its function is as follows. A GTPase-activating protein (GAP) that modifies Der/EngA GTPase function. May play a role in ribosome biogenesis. The sequence is that of Der GTPase-activating protein YihI from Serratia proteamaculans (strain 568).